A 334-amino-acid polypeptide reads, in one-letter code: NADH dehydrogenase (ubiquinone) complex I, assembly factor 6 homolog (334 aa).

A mitochondrion-targeting transit peptide spans 1–11; that stretch reads MRRLVRNWNCR.

The protein belongs to the NDUFAF6 family. As to quaternary structure, associates with mitochondrial complex I assembly intermediates during its biogenesis. Forms a complex including sicily, ND-42 and Hsp83; the complex is necessary to chaperone ND-42 in the cytoplasm before mitochondrial import; the interaction between sicily and ND-42 is direct and occurs preferably between the unprocessed forms in the cytoplasm; the interaction with Hsp83 is direct. Interacts with ND-30; interaction is stronger between the unprocessed forms in the cytoplasm. In terms of tissue distribution, expressed in the ventral nerve cord, larval brain, motor neuron axons, imaginal disks, and muscles (at protein level).

It is found in the mitochondrion inner membrane. Its subcellular location is the cytoplasm. The protein resides in the cytosol. Its function is as follows. Involved in the assembly of mitochondrial NADH:ubiquinone oxidoreductase complex (Complex I) at early stages. Interacts with cytosolic Hsp90 to chaperone the Complex I subunit ND-42 in the cytoplasm. This chain is NADH dehydrogenase (ubiquinone) complex I, assembly factor 6 homolog, found in Drosophila melanogaster (Fruit fly).